The primary structure comprises 337 residues: Mannitol dehydrogenase (337 aa).

Cys-27, His-49, Cys-80, Cys-83, Cys-86, Cys-94, and Cys-143 together coordinate Zn(2+).

Belongs to the zinc-containing alcohol dehydrogenase family. Zn(2+) is required as a cofactor.

It carries out the reaction D-mannitol + NAD(+) = D-mannose + NADH + H(+). Functionally, oxidizes mannitol to mannose. Provides the initial step by which translocated mannitol is committed to central metabolism and, by regulating mannitol pool size, is important in regulating salt tolerance at the cellular level. The sequence is that of Mannitol dehydrogenase (ELI3) from Petroselinum crispum (Parsley).